The following is a 256-amino-acid chain: Gamma carbonic anhydrase-like 2, mitochondrial (256 aa).

Residues 1–33 (MATSLARISKRSITSAVSSNLIRRYFAAEAVAV) constitute a mitochondrion transit peptide. Residues 103-105 (RGD) and 118-119 (QE) each bind substrate. Position 124 (histidine 124) interacts with Zn(2+). Positions 152, 164, and 231 each coordinate substrate.

It belongs to the gamma-class carbonic anhydrase family. Component of the mitochondrial oxidoreductase respiratory chain complex I; element of the extra matrix-exposed domain, which is attached to the membrane arm of this complex. Interacts with GAMMACA2.

Its subcellular location is the mitochondrion membrane. In terms of biological role, involved in complex I assembly in mitochondria and respiration. The polypeptide is Gamma carbonic anhydrase-like 2, mitochondrial (GAMMACAL2) (Arabidopsis thaliana (Mouse-ear cress)).